The following is a 242-amino-acid chain: uncharacterized protein (242 aa).

The N-terminal stretch at 1-17 is a signal peptide; sequence MKFSPAYLLAFAPIVAA. N-linked (GlcNAc...) asparagine glycosylation is found at Asn-47, Asn-86, Asn-122, Asn-159, and Asn-178. A disordered region spans residues 176–214; sequence NANESTADGQAQSGSSGSSSDSGSHSGHSSATQTSSTTA. The segment covering 180–214 has biased composition (low complexity); the sequence is STADGQAQSGSSGSSSDSGSHSGHSSATQTSSTTA. Ala-218 is lipidated: GPI-like-anchor amidated alanine. A propeptide spans 219 to 242 (removed in mature form); the sequence is GAVALETAAWGILGAAVVGGLAVL.

In terms of processing, the GPI-like anchor contains a phosphoceramide lipid group. The anchor position has not been determined.

The protein resides in the cell membrane. This is an uncharacterized protein from Aspergillus fumigatus (strain ATCC MYA-4609 / CBS 101355 / FGSC A1100 / Af293) (Neosartorya fumigata).